The sequence spans 445 residues: RING finger and transmembrane domain-containing protein 2 (445 aa).

The Extracellular segment spans residues 1–183; sequence MWLLAAHQVL…LLAKLCFQHK (183 aa). The segment at 12-41 is disordered; it reads KMQRRHSSNTDNIPPERSRSQALSPEASVD. Residues 184–203 traverse the membrane as a helical segment; that stretch reads LGIAVCIGMASTFAYANSTL. At 204 to 215 the chain is on the cytoplasmic side; the sequence is REQVSLKEKRSV. Residues 216–236 form a helical membrane-spanning segment; it reads LVILWILAFLAGNTMYVLYTF. At 237 to 256 the chain is on the extracellular side; that stretch reads SSQQLYSSLIFLKPNLETLD. A helical transmembrane segment spans residues 257-277; it reads FFDLLWIVGIADFVLKYITIA. Over 278-330 the chain is Cytoplasmic; the sequence is LKCLIVALPKIILAVKSKGKFYLVIEELSQLFRSLVPIQLWYKYIMGDDSSNS. A helical transmembrane segment spans residues 331 to 351; sequence YFLGGVLIVLYSLCKSFDICG. Topologically, residues 352 to 445 are extracellular; that stretch reads RVGGLRKALK…GATSAHLQVY (94 aa). An RING-type zinc finger spans residues 385-423; sequence CAICQAEFRDPMILLCQHVFCEECLCLWLDRERTCPLCR.

The protein localises to the membrane. Functionally, E3 ubiquitin-protein ligase that negatively regulates IL3-dependent cellular responses through IL3RA ubiquitination and degradation by the proteasome, having an anti-inflammatory effect. This is RING finger and transmembrane domain-containing protein 2 (Rnft2) from Mus musculus (Mouse).